We begin with the raw amino-acid sequence, 455 residues long: Adenylosuccinate synthetase isozyme 2 (455 aa).

Positions 1 to 25 are disordered; it reads MSDSGDAQPQDGGNSSSSRGKSPSV. The segment covering 12 to 25 has biased composition (low complexity); it reads GGNSSSSRGKSPSV. Residues 38–44 and 66–68 each bind GTP; these read GDEGKGK and GHT. Asp39 acts as the Proton acceptor in catalysis. Residues Asp39 and Gly66 each coordinate Mg(2+). Position 39 (Asp39) interacts with substrate. Residues 39–42, 64–67, Thr161, Arg175, Asn254, Thr269, and Arg333 contribute to the IMP site; these read DEGK and NAGH. Catalysis depends on His67, which acts as the Proton donor. Residue 329–335 participates in substrate binding; sequence VTTGRKR. Residues Arg335, 361 to 363, and 443 to 446 contribute to the GTP site; these read KLD and GVGK.

Belongs to the adenylosuccinate synthetase family. In terms of assembly, homodimer. Mg(2+) is required as a cofactor.

The protein resides in the cytoplasm. It is found in the mitochondrion. The enzyme catalyses IMP + L-aspartate + GTP = N(6)-(1,2-dicarboxyethyl)-AMP + GDP + phosphate + 2 H(+). It functions in the pathway purine metabolism; AMP biosynthesis via de novo pathway; AMP from IMP: step 1/2. With respect to regulation, inhibited competitively by AMP and IMP and non-competitively by fructose 1,6-bisphosphate. In terms of biological role, plays an important role in the de novo pathway and in the salvage pathway of purine nucleotide biosynthesis. Catalyzes the first committed step in the biosynthesis of AMP from IMP. This chain is Adenylosuccinate synthetase isozyme 2 (adss2), found in Danio rerio (Zebrafish).